We begin with the raw amino-acid sequence, 172 residues long: Ubiquitin-conjugating enzyme E2 2 (172 aa).

The 147-residue stretch at Pro-4–Glu-150 folds into the UBC core domain. The active-site Glycyl thioester intermediate is the Cys-88. Ser-120 bears the Phosphoserine; by SGV1 mark. Residues Val-145 to Asp-172 form a disordered region. The segment covering Asp-151 to Asp-172 has biased composition (acidic residues).

This sequence belongs to the ubiquitin-conjugating enzyme family. In terms of assembly, forms a heterodimer complexes with the E3 enzymes BRE1, RAD18 and UBR1. Also interacts with UBR2, RTF1, PAF1 and the RNA polymerase II hyperphosphorylated form. The interaction with RNA polymerase II is BRE1- and PAF1-dependent. The N-terminus is blocked.

The protein localises to the cytoplasm. Its subcellular location is the nucleus. The enzyme catalyses S-ubiquitinyl-[E1 ubiquitin-activating enzyme]-L-cysteine + [E2 ubiquitin-conjugating enzyme]-L-cysteine = [E1 ubiquitin-activating enzyme]-L-cysteine + S-ubiquitinyl-[E2 ubiquitin-conjugating enzyme]-L-cysteine.. Its pathway is protein modification; protein ubiquitination. Functionally, E2 ubiquitin-conjugating enzyme that accepts ubiquitin from the ubiquitin-activating enzyme E1 and transfers it to a E3 ubiquitin-protein ligase. In association with the E3 enzyme BRE1 and LGE1, it plays a role in transcription regulation by catalyzing the monoubiquitination of histone H2B to form H2BK123ub1. H2BK123ub1 gives a specific tag for epigenetic transcriptional activation, elongation by RNA polymerase II, telomeric silencing, and is also a prerequisite for H3K4me and H3K79me formation. In association with the E3 enzyme RAD18, it catalyzes the monoubiquitination of POL30 'Lys-164', involved in postreplication repair of UV-damaged DNA. The RAD6/UBC2-RAD18 complex is also involved in prevention of spontaneous mutations caused by 7,8-dihydro-8-oxoguanine. In association with the E3 enzyme UBR1, is involved in N-end rule-dependent protein degradation. Also involved in sporulation. This Saccharomyces cerevisiae (strain ATCC 204508 / S288c) (Baker's yeast) protein is Ubiquitin-conjugating enzyme E2 2 (RAD6).